We begin with the raw amino-acid sequence, 101 residues long: Urease subunit beta (101 aa).

Belongs to the urease beta subunit family. Heterotrimer of UreA (gamma), UreB (beta) and UreC (alpha) subunits. Three heterotrimers associate to form the active enzyme.

It localises to the cytoplasm. The enzyme catalyses urea + 2 H2O + H(+) = hydrogencarbonate + 2 NH4(+). It functions in the pathway nitrogen metabolism; urea degradation; CO(2) and NH(3) from urea (urease route): step 1/1. The protein is Urease subunit beta of Burkholderia cenocepacia (strain ATCC BAA-245 / DSM 16553 / LMG 16656 / NCTC 13227 / J2315 / CF5610) (Burkholderia cepacia (strain J2315)).